The sequence spans 285 residues: Bifunctional protein FolD (285 aa).

Residues 165-167 (GRS) and Ser-190 contribute to the NADP(+) site.

This sequence belongs to the tetrahydrofolate dehydrogenase/cyclohydrolase family. Homodimer.

The catalysed reaction is (6R)-5,10-methylene-5,6,7,8-tetrahydrofolate + NADP(+) = (6R)-5,10-methenyltetrahydrofolate + NADPH. It carries out the reaction (6R)-5,10-methenyltetrahydrofolate + H2O = (6R)-10-formyltetrahydrofolate + H(+). Its pathway is one-carbon metabolism; tetrahydrofolate interconversion. In terms of biological role, catalyzes the oxidation of 5,10-methylenetetrahydrofolate to 5,10-methenyltetrahydrofolate and then the hydrolysis of 5,10-methenyltetrahydrofolate to 10-formyltetrahydrofolate. The chain is Bifunctional protein FolD from Burkholderia pseudomallei (strain 1710b).